Here is a 145-residue protein sequence, read N- to C-terminus: Eukaryotic translation initiation factor 1A (145 aa).

Residues 1 to 15 (MPKNKGKGGKNRKRG) are compositionally biased toward basic residues. The segment at 1–25 (MPKNKGKGGKNRKRGKNEADDDKRE) is disordered. Residues 16–25 (KNEADDDKRE) show a composition bias toward basic and acidic residues. Residues 22–96 (DKRELVFKED…DKADVILKLM (75 aa)) form the S1-like domain.

It belongs to the eIF-1A family.

Functionally, seems to be required for maximal rate of protein biosynthesis. Enhances ribosome dissociation into subunits and stabilizes the binding of the initiator Met-tRNA(I) to 40 S ribosomal subunits. The polypeptide is Eukaryotic translation initiation factor 1A (Onobrychis viciifolia (Common sainfoin)).